The following is a 307-amino-acid chain: tRNA(Met) cytidine acetate ligase (307 aa).

ATP is bound by residues 12-25 (VVEY…HIYQ), glycine 106, asparagine 163, and arginine 188.

The protein belongs to the TmcAL family.

It localises to the cytoplasm. The enzyme catalyses cytidine(34) in elongator tRNA(Met) + acetate + ATP = N(4)-acetylcytidine(34) in elongator tRNA(Met) + AMP + diphosphate. Catalyzes the formation of N(4)-acetylcytidine (ac(4)C) at the wobble position of elongator tRNA(Met), using acetate and ATP as substrates. First activates an acetate ion to form acetyladenylate (Ac-AMP) and then transfers the acetyl group to tRNA to form ac(4)C34. This Mycoplasmopsis synoviae (strain 53) (Mycoplasma synoviae) protein is tRNA(Met) cytidine acetate ligase.